The following is a 128-amino-acid chain: Fluoride-specific ion channel FluC (128 aa).

A run of 4 helical transmembrane segments spans residues 5 to 25 (IVAI…LALA), 35 to 55 (LGTL…AVVF), 67 to 87 (LFVI…SVEV), and 96 to 116 (FGWA…LTAL). Na(+) contacts are provided by Gly-75 and Thr-78.

This sequence belongs to the fluoride channel Fluc/FEX (TC 1.A.43) family.

It localises to the cell inner membrane. It carries out the reaction fluoride(in) = fluoride(out). Na(+) is not transported, but it plays an essential structural role and its presence is essential for fluoride channel function. In terms of biological role, fluoride-specific ion channel. Important for reducing fluoride concentration in the cell, thus reducing its toxicity. In Burkholderia ambifaria (strain MC40-6), this protein is Fluoride-specific ion channel FluC.